A 185-amino-acid chain; its full sequence is Ribosome-recycling factor (185 aa).

It belongs to the RRF family.

The protein resides in the cytoplasm. Its function is as follows. Responsible for the release of ribosomes from messenger RNA at the termination of protein biosynthesis. May increase the efficiency of translation by recycling ribosomes from one round of translation to another. The polypeptide is Ribosome-recycling factor (Coxiella burnetii (strain CbuK_Q154) (Coxiella burnetii (strain Q154))).